The primary structure comprises 498 residues: Probable malate:quinone oxidoreductase (498 aa).

The protein belongs to the MQO family. Requires FAD as cofactor.

It catalyses the reaction (S)-malate + a quinone = a quinol + oxaloacetate. Its pathway is carbohydrate metabolism; tricarboxylic acid cycle; oxaloacetate from (S)-malate (quinone route): step 1/1. This is Probable malate:quinone oxidoreductase from Prochlorococcus marinus (strain MIT 9301).